Reading from the N-terminus, the 454-residue chain is Bifunctional protein GlmU (454 aa).

The tract at residues 1–226 (MSTTVIILAA…AFEVEGVNDR (226 aa)) is pyrophosphorylase. Residues 8–11 (LAAG), Lys-22, Gln-73, 78–79 (GT), 100–102 (YGD), Gly-137, Glu-151, Asn-166, and Asn-224 contribute to the UDP-N-acetyl-alpha-D-glucosamine site. Asp-102 lines the Mg(2+) pocket. Asn-224 lines the Mg(2+) pocket. Positions 227–247 (LQLAALEREFQKQQAKELMQQ) are linker. Residues 248–454 (GVTFADPARF…NYQRPQKLKK (207 aa)) are N-acetyltransferase. Positions 330 and 348 each coordinate UDP-N-acetyl-alpha-D-glucosamine. His-360 (proton acceptor) is an active-site residue. Residues Tyr-363 and Asn-374 each contribute to the UDP-N-acetyl-alpha-D-glucosamine site. Residues Ala-377, 383-384 (NY), Ser-402, Ala-420, and Arg-437 contribute to the acetyl-CoA site.

It in the N-terminal section; belongs to the N-acetylglucosamine-1-phosphate uridyltransferase family. In the C-terminal section; belongs to the transferase hexapeptide repeat family. Homotrimer. Requires Mg(2+) as cofactor.

It localises to the cytoplasm. It catalyses the reaction alpha-D-glucosamine 1-phosphate + acetyl-CoA = N-acetyl-alpha-D-glucosamine 1-phosphate + CoA + H(+). The enzyme catalyses N-acetyl-alpha-D-glucosamine 1-phosphate + UTP + H(+) = UDP-N-acetyl-alpha-D-glucosamine + diphosphate. Its pathway is nucleotide-sugar biosynthesis; UDP-N-acetyl-alpha-D-glucosamine biosynthesis; N-acetyl-alpha-D-glucosamine 1-phosphate from alpha-D-glucosamine 6-phosphate (route II): step 2/2. It functions in the pathway nucleotide-sugar biosynthesis; UDP-N-acetyl-alpha-D-glucosamine biosynthesis; UDP-N-acetyl-alpha-D-glucosamine from N-acetyl-alpha-D-glucosamine 1-phosphate: step 1/1. The protein operates within bacterial outer membrane biogenesis; LPS lipid A biosynthesis. In terms of biological role, catalyzes the last two sequential reactions in the de novo biosynthetic pathway for UDP-N-acetylglucosamine (UDP-GlcNAc). The C-terminal domain catalyzes the transfer of acetyl group from acetyl coenzyme A to glucosamine-1-phosphate (GlcN-1-P) to produce N-acetylglucosamine-1-phosphate (GlcNAc-1-P), which is converted into UDP-GlcNAc by the transfer of uridine 5-monophosphate (from uridine 5-triphosphate), a reaction catalyzed by the N-terminal domain. The polypeptide is Bifunctional protein GlmU (Acinetobacter baumannii (strain ACICU)).